A 362-amino-acid polypeptide reads, in one-letter code: Probable endopolygalacturonase B (362 aa).

The signal sequence occupies residues 1 to 20 (MHFLQNAFVAATMGAAPAAA). A propeptide spanning residues 21-25 (TPLEK) is cleaved from the precursor. Cys28 and Cys43 are disulfide-bonded. 6 PbH1 repeats span residues 155–184 (ADHL…DIGQ), 185–206 (STYI…AINS), 207–227 (GEHI…SIGS), 236–257 (VNDV…RIKT), 265–287 (VENV…VVEQ), and 299–344 (TNGV…DVTG). Asp199 functions as the Proton donor in the catalytic mechanism. Cysteines 201 and 217 form a disulfide. His221 is an active-site residue. Residues Cys327 and Cys332 are joined by a disulfide bond. A glycan (N-linked (GlcNAc...) asparagine) is linked at Asn334. A disulfide bond links Cys351 and Cys360.

It belongs to the glycosyl hydrolase 28 family.

The protein localises to the secreted. The catalysed reaction is (1,4-alpha-D-galacturonosyl)n+m + H2O = (1,4-alpha-D-galacturonosyl)n + (1,4-alpha-D-galacturonosyl)m.. Functionally, involved in maceration and soft-rotting of plant tissue. Hydrolyzes the 1,4-alpha glycosidic bonds of de-esterified pectate in the smooth region of the plant cell wall. This chain is Probable endopolygalacturonase B (pgaB), found in Aspergillus kawachii (White koji mold).